The primary structure comprises 431 residues: Adenylosuccinate synthetase (431 aa).

GTP contacts are provided by residues 13-19 (GDEGKGK) and 41-43 (GHT). Catalysis depends on Asp14, which acts as the Proton acceptor. 2 residues coordinate Mg(2+): Asp14 and Gly41. IMP-binding positions include 14-17 (DEGK), 39-42 (NAGH), Thr130, Arg144, Gln225, Thr240, and Arg304. His42 (proton donor) is an active-site residue. 300-306 (ATTGRKR) lines the substrate pocket. Residues Arg306, 332 to 334 (KLD), and 415 to 417 (STG) contribute to the GTP site.

It belongs to the adenylosuccinate synthetase family. As to quaternary structure, homodimer. Mg(2+) serves as cofactor.

The protein resides in the cytoplasm. It catalyses the reaction IMP + L-aspartate + GTP = N(6)-(1,2-dicarboxyethyl)-AMP + GDP + phosphate + 2 H(+). Its pathway is purine metabolism; AMP biosynthesis via de novo pathway; AMP from IMP: step 1/2. Its function is as follows. Plays an important role in the de novo pathway of purine nucleotide biosynthesis. Catalyzes the first committed step in the biosynthesis of AMP from IMP. The chain is Adenylosuccinate synthetase from Shewanella frigidimarina (strain NCIMB 400).